The following is a 122-amino-acid chain: Large ribosomal subunit protein uL14 (122 aa).

Belongs to the universal ribosomal protein uL14 family. Part of the 50S ribosomal subunit. Forms a cluster with proteins L3 and L19. In the 70S ribosome, L14 and L19 interact and together make contacts with the 16S rRNA in bridges B5 and B8.

In terms of biological role, binds to 23S rRNA. Forms part of two intersubunit bridges in the 70S ribosome. The polypeptide is Large ribosomal subunit protein uL14 (Protochlamydia amoebophila (strain UWE25)).